Here is a 264-residue protein sequence, read N- to C-terminus: Thymidylate synthase (264 aa).

Residue R21 participates in dUMP binding. H51 provides a ligand contact to (6R)-5,10-methylene-5,6,7,8-tetrahydrofolate. Residue 126-127 (RR) coordinates dUMP. The Nucleophile role is filled by C146. Residues 166 to 169 (RSAD), N177, and 207 to 209 (HIY) each bind dUMP. D169 lines the (6R)-5,10-methylene-5,6,7,8-tetrahydrofolate pocket. A263 lines the (6R)-5,10-methylene-5,6,7,8-tetrahydrofolate pocket.

Belongs to the thymidylate synthase family. Bacterial-type ThyA subfamily. In terms of assembly, homodimer.

The protein resides in the cytoplasm. The catalysed reaction is dUMP + (6R)-5,10-methylene-5,6,7,8-tetrahydrofolate = 7,8-dihydrofolate + dTMP. The protein operates within pyrimidine metabolism; dTTP biosynthesis. Functionally, catalyzes the reductive methylation of 2'-deoxyuridine-5'-monophosphate (dUMP) to 2'-deoxythymidine-5'-monophosphate (dTMP) while utilizing 5,10-methylenetetrahydrofolate (mTHF) as the methyl donor and reductant in the reaction, yielding dihydrofolate (DHF) as a by-product. This enzymatic reaction provides an intracellular de novo source of dTMP, an essential precursor for DNA biosynthesis. This is Thymidylate synthase from Porphyromonas gingivalis (strain ATCC BAA-308 / W83).